The chain runs to 137 residues: Structural protein A137R (137 aa).

It belongs to the asfivirus A137R family. In terms of assembly, interacts with host TBK1.

Its subcellular location is the virion. The protein resides in the host cytoplasm. In terms of biological role, plays a role in the inhibition of the host innate immune response. Mechanistically, promotes the autophagy-mediated lysosomal degradation of host TBK1 and affects IRF3 nuclear translocation to block type I IFN production. The protein is Structural protein A137R of Ornithodoros (relapsing fever ticks).